The sequence spans 947 residues: Leucine-rich repeat-containing protein 37B (947 aa).

Positions methionine 1–proline 27 are cleaved as a signal peptide. The Extracellular portion of the chain corresponds to leucine 28–lysine 905. Disordered regions lie at residues leucine 42–glutamine 88, tyrosine 226–leucine 257, glutamate 294–threonine 458, and serine 484–alanine 514. Residues serine 311–leucine 320 show a composition bias toward polar residues. Asparagine 358 carries N-linked (GlcNAc...) asparagine glycosylation. Polar residues-rich tracts occupy residues glycine 404–threonine 415, serine 436–glutamine 445, and leucine 495–threonine 507. LRR repeat units lie at residues isoleucine 556–alanine 577, tryptophan 580–glycine 601, tyrosine 604–serine 625, phenylalanine 628–alanine 649, phenylalanine 655–glutamate 676, and alanine 679–leucine 699. A glycan (N-linked (GlcNAc...) asparagine) is linked at asparagine 789. A coiled-coil region spans residues aspartate 867–valine 897. The helical transmembrane segment at leucine 906–isoleucine 926 threads the bilayer. Residues glutamate 927–alanine 947 lie on the Cytoplasmic side of the membrane.

The protein resides in the membrane. The protein is Leucine-rich repeat-containing protein 37B (LRRC37B) of Homo sapiens (Human).